Reading from the N-terminus, the 134-residue chain is Profilin-2 (134 aa).

Residues Cys13 and Cys118 are joined by a disulfide bond. The short motif at 84–100 is the Involved in PIP2 interaction element; the sequence is AVIRGKKGSGGITIKKT. Phosphothreonine is present on Thr114.

The protein belongs to the profilin family. Occurs in many kinds of cells as a complex with monomeric actin in a 1:1 ratio. Phosphorylated by MAP kinases.

Its subcellular location is the cytoplasm. The protein resides in the cytoskeleton. Functionally, binds to actin and affects the structure of the cytoskeleton. At high concentrations, profilin prevents the polymerization of actin, whereas it enhances it at low concentrations. This is Profilin-2 from Olea europaea (Common olive).